The sequence spans 282 residues: MKKLSVIFLSVSMLSSIAFCDQDKVVATYKGGEVKESQIMQEFKPQLNLQSGETIKNFDDFPLQDQEKLIKIYVNNLLLKEEVAKSSITSSKEFQEKLENAKNQLAQQELLANYIKSNITDKMFDDEYNKYVDNLKGKEQIKVAHILVKSQKEANTVKTKLSKGGNFNKLAEEFSLDKATASNGGVIGYIILNQSGQLVPEFENKAFALKVNEVSTPVKTDFGWHIIKVLEKKPVPIPTKKEAKVTIDNILAAEILKKYISDLEAKADLKIMLPKANSKTGS.

The signal sequence occupies residues 1–20; it reads MKKLSVIFLSVSMLSSIAFC. A PpiC domain is found at 138–231; it reads KEQIKVAHIL…FGWHIIKVLE (94 aa).

This sequence belongs to the PpiC/parvulin rotamase family.

It is found in the cell outer membrane. The enzyme catalyses [protein]-peptidylproline (omega=180) = [protein]-peptidylproline (omega=0). The sequence is that of Parvulin-like PPIase (plp) from Rickettsia typhi (strain ATCC VR-144 / Wilmington).